Reading from the N-terminus, the 492-residue chain is Cysteine--tRNA ligase (492 aa).

Residue Cys-29 participates in Zn(2+) binding. The 'HIGH' region signature appears at 31 to 41; that stretch reads PTVYDYAHIGN. Cys-222, His-247, and Glu-251 together coordinate Zn(2+). Positions 279–283 match the 'KMSKS' region motif; sequence KMSKS. Position 282 (Lys-282) interacts with ATP.

Belongs to the class-I aminoacyl-tRNA synthetase family. Monomer. Zn(2+) is required as a cofactor.

It localises to the cytoplasm. The enzyme catalyses tRNA(Cys) + L-cysteine + ATP = L-cysteinyl-tRNA(Cys) + AMP + diphosphate. The chain is Cysteine--tRNA ligase from Treponema denticola (strain ATCC 35405 / DSM 14222 / CIP 103919 / JCM 8153 / KCTC 15104).